The sequence spans 738 residues: Catalase-peroxidase (738 aa).

Residues 1-24 form the signal peptide; it reads MEPLFPKRLLSIAVLCVASATAQA. The segment at residues 104–226 is a cross-link (tryptophyl-tyrosyl-methioninium (Trp-Tyr) (with M-252)); that stretch reads WHAAGTYRMI…FGATEMGLIY (123 aa). His-105 (proton acceptor) is an active-site residue. The tract at residues 191 to 213 is disordered; sequence EEVNWGPEGQWLTDRRHSGDRKL. Basic and acidic residues predominate over residues 203–213; it reads TDRRHSGDRKL. The segment at residues 226–252 is a cross-link (tryptophyl-tyrosyl-methioninium (Tyr-Met) (with W-104)); it reads YVNPEGPHGNPDPIAAAHDIRQAFGRM. Position 267 (His-267) interacts with heme b.

This sequence belongs to the peroxidase family. Peroxidase/catalase subfamily. Homodimer or homotetramer. The cofactor is heme b. Formation of the three residue Trp-Tyr-Met cross-link is important for the catalase, but not the peroxidase activity of the enzyme.

The catalysed reaction is H2O2 + AH2 = A + 2 H2O. It carries out the reaction 2 H2O2 = O2 + 2 H2O. Functionally, bifunctional enzyme with both catalase and broad-spectrum peroxidase activity. The polypeptide is Catalase-peroxidase (Saccharophagus degradans (strain 2-40 / ATCC 43961 / DSM 17024)).